The primary structure comprises 83 residues: uncharacterized protein (83 aa).

The next 3 helical transmembrane spans lie at 4–24 (AILS…GVLM), 32–52 (IGNI…LKAF), and 54–74 (YYDL…IIIG).

The protein localises to the cell membrane. This is an uncharacterized protein from Methanocaldococcus jannaschii (strain ATCC 43067 / DSM 2661 / JAL-1 / JCM 10045 / NBRC 100440) (Methanococcus jannaschii).